The chain runs to 244 residues: Claudin-12 (244 aa).

Topologically, residues 1–10 (MGCRDVHAAT) are cytoplasmic. The helical transmembrane segment at 11 to 31 (VLSFLCGIASVAGLFAGTLLP) threads the bilayer. Residues 32-87 (NWRKLRLITFNRNEKNLTVYTGLWVKCARYDGGNDCLMYDAAWYSSVDQLDLRVLQ) are Extracellular-facing. Residues 88–108 (FALPLSILIAMGALLLCLIGM) traverse the membrane as a helical segment. Topologically, residues 109 to 135 (CNTAFRSSVPNIKLAKCLVNSAGCHLV) are cytoplasmic. The helical transmembrane segment at 136-156 (AGLLFFLAGTVSLSPSIWVIF) threads the bilayer. The Extracellular segment spans residues 157–174 (YNIHLNRKFEPVFAFDYA). Residues 175–195 (VYVTVASAGGLFMTALLLFIW) form a helical membrane-spanning segment. Residues 196–244 (YCACKSLPSPFWQPLYSHPPGMHTYSQPYSARSRLSAIEIDIPVVSHTT) are Cytoplasmic-facing. 2 positions are modified to phosphoserine: Ser228 and Ser231.

This sequence belongs to the claudin family. As to quaternary structure, interacts with OCLN.

It localises to the cell junction. The protein localises to the tight junction. The protein resides in the cell membrane. In terms of biological role, plays a major role in tight junction-specific obliteration of the intercellular space, through calcium-independent cell-adhesion activity. The polypeptide is Claudin-12 (CLDN12) (Bos taurus (Bovine)).